Consider the following 305-residue polypeptide: Protoheme IX farnesyltransferase 2 (305 aa).

The next 7 helical transmembrane spans lie at 38–58, 60–80, 115–135, 157–177, 181–201, 236–256, and 285–305; these read LITT…SFLG, LNTV…SCAV, ILLI…AAVI, INTV…WTAV, IGVV…PHFL, VACL…IVIL, and FVYS…FTLF.

It belongs to the UbiA prenyltransferase family. Protoheme IX farnesyltransferase subfamily. In terms of assembly, interacts with CtaA.

It is found in the cell membrane. It catalyses the reaction heme b + (2E,6E)-farnesyl diphosphate + H2O = Fe(II)-heme o + diphosphate. The protein operates within porphyrin-containing compound metabolism; heme O biosynthesis; heme O from protoheme: step 1/1. In terms of biological role, converts heme B (protoheme IX) to heme O by substitution of the vinyl group on carbon 2 of heme B porphyrin ring with a hydroxyethyl farnesyl side group. This is Protoheme IX farnesyltransferase 2 from Bacillus velezensis (strain DSM 23117 / BGSC 10A6 / LMG 26770 / FZB42) (Bacillus amyloliquefaciens subsp. plantarum).